Reading from the N-terminus, the 227-residue chain is Phosphoglycolate phosphatase (227 aa).

Asp14 functions as the Nucleophile in the catalytic mechanism. Mg(2+) contacts are provided by Asp14, Asp16, and Asp177.

It belongs to the HAD-like hydrolase superfamily. CbbY/CbbZ/Gph/YieH family. The cofactor is Mg(2+).

It carries out the reaction 2-phosphoglycolate + H2O = glycolate + phosphate. It functions in the pathway organic acid metabolism; glycolate biosynthesis; glycolate from 2-phosphoglycolate: step 1/1. Specifically catalyzes the dephosphorylation of 2-phosphoglycolate. Is involved in the dissimilation of the intracellular 2-phosphoglycolate formed during the DNA repair of 3'-phosphoglycolate ends, a major class of DNA lesions induced by oxidative stress. This chain is Phosphoglycolate phosphatase, found in Thiobacillus denitrificans (strain ATCC 25259 / T1).